Consider the following 938-residue polypeptide: Catenin delta-1 (938 aa).

An N-acetylmethionine modification is found at M1. The interval 1-357 (MDDSEVESTA…ASLDSLRKGM (357 aa)) is necessary and sufficient for interaction with CCDC85B. Position 4 is a phosphoserine (S4). A coiled-coil region spans residues 10–46 (ASILASVKEQEAQFEKLTRALEEERRHVSAQLERVRV). S47 bears the Phosphoserine mark. T59 bears the Phosphothreonine mark. A Phosphotyrosine; by FYN modification is found at Y112. S125 is subject to Phosphoserine. Phosphotyrosine occurs at positions 217 and 221. S225 is modified (phosphoserine). Y228 carries the phosphotyrosine modification. 2 positions are modified to phosphoserine: S230 and S252. Position 257 is a phosphotyrosine (Y257). Phosphoserine is present on residues S268 and S269. Y280 is modified (phosphotyrosine). A Phosphoserine modification is found at S288. Y291 carries the post-translational modification Phosphotyrosine. Phosphoserine is present on S300. T304 is modified (phosphothreonine). S320, S346, S349, and S352 each carry phosphoserine. ARM repeat units lie at residues 358-395 (PPPS…HLCY), 398-437 (DKVK…NISF), 441-475 (QDNK…ITGT), and 476-516 (LWNL…NEDC). A Glycyl lysine isopeptide (Lys-Gly) (interchain with G-Cter in SUMO2) cross-link involves residue K421. Residue K517 forms a Glycyl lysine isopeptide (Lys-Gly) (interchain with G-Cter in SUMO2) linkage. 6 ARM repeats span residues 534–573 (LRNV…DSDS), 583–624 (LRNL…AKKG), 653–693 (ARGY…NLCA), 700–739 (RYIR…NLAV), 740–780 (DARN…SILN), and 781–826 (TINE…ALVL). S617 is subject to Phosphoserine. The short motif at 622 to 629 (KKGKDEWF) is the Nuclear localization signal (NLS) element. Position 713 is a phosphoserine (S713). S811, S847, S857, S859, S861, and S864 each carry phosphoserine. The disordered stretch occupies residues 855–938 (NASRSQSSHS…LKGAPLMQKI (84 aa)). A Phosphotyrosine modification is found at Y865. A Phosphoserine modification is found at S868. T869 carries the post-translational modification Phosphothreonine. Residues 875 to 888 (RNQKSDKKPDREEI) are compositionally biased toward basic and acidic residues. A Phosphoserine modification is found at S879. Residue K882 forms a Glycyl lysine isopeptide (Lys-Gly) (interchain with G-Cter in SUMO2) linkage. Residues 892–908 (NMGSNTKSLDNNYSTLN) show a composition bias toward polar residues. Residue S899 is modified to Phosphoserine. Phosphotyrosine is present on Y904. T906 and T916 each carry phosphothreonine. Residues 909–922 (ERGDHNRTLDRSGD) are compositionally biased toward basic and acidic residues. Residue S920 is modified to Phosphoserine.

The protein belongs to the beta-catenin family. As to quaternary structure, belongs to a multiprotein cell-cell adhesion complex that also contains E-cadherin/CDH1, alpha-catenin/CTNNA1, beta-catenin/CTNNB1, and gamma-catenin/JUP. Binds to the C-terminal fragment of PSEN1 and mutually competes for CDH1. Interacts with ZBTB33. Interacts with GLIS2. Interacts with FER. Interacts with NANOS1 (via N-terminal region). Interacts (via N-terminus) with GNA12; the interaction regulates CDH1-mediated cell-cell adhesion. Interacts with GNA13. Component of a cadherin:catenin adhesion complex composed of at least of CDH26, beta-catenin/CTNNB1, alpha-catenin/CTNNA1 and p120 catenin/CTNND1. Interacts with CCDC85B. Interacts with PLPP3; negatively regulates the PLPP3-mediated stabilization of CTNNB1. Interacts with DSG3; the interaction facilitates DSG3 localization and retention at cell-cell junctions. Interacts with CTNND1/p120-catenin; the interaction controls CADH5 endocytosis. Post-translationally, phosphorylated by FER and other protein-tyrosine kinases. Phosphorylated at Ser-288 by PAK5. Dephosphorylated by PTPRJ. Expressed in basal keratinocytes (at protein level).

It localises to the cell junction. The protein resides in the adherens junction. The protein localises to the cytoplasm. It is found in the nucleus. Its subcellular location is the cell membrane. Key regulator of cell-cell adhesion that associates with and regulates the cell adhesion properties of both C-, E- and N-cadherins, being critical for their surface stability. Promotes localization and retention of DSG3 at cell-cell junctions, via its interaction with DSG3. Beside cell-cell adhesion, regulates gene transcription through several transcription factors including ZBTB33/Kaiso2 and GLIS2, and the activity of Rho family GTPases and downstream cytoskeletal dynamics. Implicated both in cell transformation by SRC and in ligand-induced receptor signaling through the EGF, PDGF, CSF-1 and ERBB2 receptors. The polypeptide is Catenin delta-1 (Ctnnd1) (Mus musculus (Mouse)).